Reading from the N-terminus, the 273-residue chain is 4-hydroxy-tetrahydrodipicolinate reductase (273 aa).

NAD(+) is bound by residues 12 to 17 and E38; that span reads GAGGRM. Residue R39 coordinates NADP(+). Residues 102 to 104 and 126 to 129 contribute to the NAD(+) site; these read GTT and AANF. H159 (proton donor/acceptor) is an active-site residue. H160 is a (S)-2,3,4,5-tetrahydrodipicolinate binding site. The Proton donor role is filled by K163. Residue 169–170 coordinates (S)-2,3,4,5-tetrahydrodipicolinate; it reads GT.

It belongs to the DapB family. Homotetramer.

It is found in the cytoplasm. It catalyses the reaction (S)-2,3,4,5-tetrahydrodipicolinate + NAD(+) + H2O = (2S,4S)-4-hydroxy-2,3,4,5-tetrahydrodipicolinate + NADH + H(+). It carries out the reaction (S)-2,3,4,5-tetrahydrodipicolinate + NADP(+) + H2O = (2S,4S)-4-hydroxy-2,3,4,5-tetrahydrodipicolinate + NADPH + H(+). The protein operates within amino-acid biosynthesis; L-lysine biosynthesis via DAP pathway; (S)-tetrahydrodipicolinate from L-aspartate: step 4/4. In terms of biological role, catalyzes the conversion of 4-hydroxy-tetrahydrodipicolinate (HTPA) to tetrahydrodipicolinate. This is 4-hydroxy-tetrahydrodipicolinate reductase from Escherichia coli O127:H6 (strain E2348/69 / EPEC).